The chain runs to 331 residues: MEIENHTLITKFLILGLSDDPELQPILFGLFLSMYLVTLLGNLLIILAVSSDSHLHKPMYFLLSNLSFIDICFISTTIPKMLVNMQSQIKDISYIECLTQVFFFNIFAGMDNFLLTLMAYDRFVAICHPLNYTVIMNPRLCALLILMFWIIMFWVSLIHVLLMNELNFSRGTEIPHFFCELAQVLKVSNSDNHVNNVFMYVVTSLLGVIPMTGILMSYSQIFSSLFRMSSTVSKYKAFSTCGSHLCVVTLFYGSGFGVYFSSSVVHSTQRRKVASLMYTVISPMLNPFIYTLRNKDVKGALGKLFNRVASSPSCINDIRNKLLLRSVRQIL.

The Extracellular portion of the chain corresponds to 1–25 (MEIENHTLITKFLILGLSDDPELQP). N5 is a glycosylation site (N-linked (GlcNAc...) asparagine). The helical transmembrane segment at 26 to 46 (ILFGLFLSMYLVTLLGNLLII) threads the bilayer. Topologically, residues 47–57 (LAVSSDSHLHK) are cytoplasmic. Residues 58–78 (PMYFLLSNLSFIDICFISTTI) traverse the membrane as a helical segment. Residues 79-97 (PKMLVNMQSQIKDISYIEC) lie on the Extracellular side of the membrane. A disulfide bridge connects residues C97 and C179. Residues 98–118 (LTQVFFFNIFAGMDNFLLTLM) traverse the membrane as a helical segment. The Cytoplasmic portion of the chain corresponds to 119 to 142 (AYDRFVAICHPLNYTVIMNPRLCA). Residues 143–163 (LLILMFWIIMFWVSLIHVLLM) traverse the membrane as a helical segment. The Extracellular portion of the chain corresponds to 164–196 (NELNFSRGTEIPHFFCELAQVLKVSNSDNHVNN). N-linked (GlcNAc...) asparagine glycosylation is present at N167. Residues 197–217 (VFMYVVTSLLGVIPMTGILMS) traverse the membrane as a helical segment. Residues 218-244 (YSQIFSSLFRMSSTVSKYKAFSTCGSH) lie on the Cytoplasmic side of the membrane. The chain crosses the membrane as a helical span at residues 245-265 (LCVVTLFYGSGFGVYFSSSVV). The Extracellular segment spans residues 266–271 (HSTQRR). Residues 272 to 292 (KVASLMYTVISPMLNPFIYTL) form a helical membrane-spanning segment. At 293-331 (RNKDVKGALGKLFNRVASSPSCINDIRNKLLLRSVRQIL) the chain is on the cytoplasmic side.

This sequence belongs to the G-protein coupled receptor 1 family.

Its subcellular location is the cell membrane. Possible olfactory or taste receptor. The polypeptide is Olfactory receptor 7D11 (Mus musculus (Mouse)).